We begin with the raw amino-acid sequence, 481 residues long: Probable zeta-carotene desaturase (481 aa).

Belongs to the zeta carotene desaturase family. The cofactor is decylplastoquinone. 6-decylubiquinone serves as cofactor.

It carries out the reaction 9,9'-di-cis-zeta-carotene + 2 a quinone = 7,7',9,9'-tetra-cis-lycopene + 2 a quinol. Its pathway is carotenoid biosynthesis; lycopene biosynthesis. In terms of biological role, catalyzes the conversion of zeta-carotene to lycopene via the intermediary of neurosporene. It carries out two consecutive desaturations (introduction of double bonds) at positions C-7 and C-7'. This chain is Probable zeta-carotene desaturase (zds), found in Synechococcus elongatus (strain ATCC 33912 / PCC 7942 / FACHB-805) (Anacystis nidulans R2).